The primary structure comprises 62 residues: Large ribosomal subunit protein bL32 (62 aa).

The protein belongs to the bacterial ribosomal protein bL32 family.

This chain is Large ribosomal subunit protein bL32, found in Treponema denticola (strain ATCC 35405 / DSM 14222 / CIP 103919 / JCM 8153 / KCTC 15104).